Reading from the N-terminus, the 320-residue chain is ATP-dependent 6-phosphofructokinase (320 aa).

Gly12 is a binding site for ATP. ADP contacts are provided by residues 22 to 26 (RGVVR) and 55 to 60 (RYSVSD). Residues 73–74 (RF) and 103–106 (GDGS) each bind ATP. Asp104 serves as a coordination point for Mg(2+). 126-128 (TID) contributes to the substrate binding site. Asp128 acts as the Proton acceptor in catalysis. Position 155 (Arg155) interacts with ADP. Substrate-binding positions include Arg163 and 170-172 (MGR). Residues 186-188 (GCE), Lys212, and 214-216 (KKH) each bind ADP. Residues Glu223, Arg244, and 250-253 (HIQR) each bind substrate.

The protein belongs to the phosphofructokinase type A (PFKA) family. ATP-dependent PFK group I subfamily. Prokaryotic clade 'B1' sub-subfamily. Homotetramer. Requires Mg(2+) as cofactor.

The protein localises to the cytoplasm. The enzyme catalyses beta-D-fructose 6-phosphate + ATP = beta-D-fructose 1,6-bisphosphate + ADP + H(+). The protein operates within carbohydrate degradation; glycolysis; D-glyceraldehyde 3-phosphate and glycerone phosphate from D-glucose: step 3/4. Allosterically activated by ADP and other diphosphonucleosides, and allosterically inhibited by phosphoenolpyruvate. Its function is as follows. Catalyzes the phosphorylation of D-fructose 6-phosphate to fructose 1,6-bisphosphate by ATP, the first committing step of glycolysis. This is ATP-dependent 6-phosphofructokinase from Buchnera aphidicola subsp. Schizaphis graminum (strain Sg).